A 299-amino-acid chain; its full sequence is GTPase Era (299 aa).

Residues 5-172 (KSGFVSIIGR…IDVLKSFLPE (168 aa)) form the Era-type G domain. The G1 stretch occupies residues 13–20 (GRPNVGKS). 13–20 (GRPNVGKS) lines the GTP pocket. Residues 39 to 43 (QTTRN) form a G2 region. Positions 60–63 (DTPG) are G3. Residues 60-64 (DTPGI) and 122-125 (NKID) each bind GTP. Residues 122–125 (NKID) are G4. The segment at 151–153 (ISA) is G5. The 78-residue stretch at 203-280 (TSEEIPHAIG…YLELWVKVQR (78 aa)) folds into the KH type-2 domain.

It belongs to the TRAFAC class TrmE-Era-EngA-EngB-Septin-like GTPase superfamily. Era GTPase family. Monomer.

It is found in the cytoplasm. Its subcellular location is the cell membrane. Functionally, an essential GTPase that binds both GDP and GTP, with rapid nucleotide exchange. Plays a role in 16S rRNA processing and 30S ribosomal subunit biogenesis and possibly also in cell cycle regulation and energy metabolism. This Staphylococcus epidermidis (strain ATCC 12228 / FDA PCI 1200) protein is GTPase Era.